Here is a 180-residue protein sequence, read N- to C-terminus: Translation initiation factor IF-3 (180 aa).

The protein belongs to the IF-3 family. Monomer.

Its subcellular location is the cytoplasm. Functionally, IF-3 binds to the 30S ribosomal subunit and shifts the equilibrium between 70S ribosomes and their 50S and 30S subunits in favor of the free subunits, thus enhancing the availability of 30S subunits on which protein synthesis initiation begins. The polypeptide is Translation initiation factor IF-3 (Hyphomonas neptunium (strain ATCC 15444)).